We begin with the raw amino-acid sequence, 118 residues long: Small ribosomal subunit protein uS13 (118 aa).

The tract at residues 94-118 is disordered; sequence GLPVRGQRTKTNARTRKGPRKPIKK.

This sequence belongs to the universal ribosomal protein uS13 family. In terms of assembly, part of the 30S ribosomal subunit. Forms a loose heterodimer with protein S19. Forms two bridges to the 50S subunit in the 70S ribosome.

Functionally, located at the top of the head of the 30S subunit, it contacts several helices of the 16S rRNA. In the 70S ribosome it contacts the 23S rRNA (bridge B1a) and protein L5 of the 50S subunit (bridge B1b), connecting the 2 subunits; these bridges are implicated in subunit movement. Contacts the tRNAs in the A and P-sites. The polypeptide is Small ribosomal subunit protein uS13 (Klebsiella pneumoniae (strain 342)).